We begin with the raw amino-acid sequence, 66 residues long: Type 3 secretion system chaperone YscE (66 aa).

The protein belongs to the YscE family. In terms of assembly, component of the heterodimeric YscE-YscG chaperone. The YscE-YscG chaperone forms a stable ternary complex with YscF/SctF.

The protein localises to the cytoplasm. Chaperone of the type III secretion system (T3SS), also called injectisome, which is used to inject bacterial effector proteins into eukaryotic host cells. Along with YscG, prevents premature polymerization of the YscF/SctF needle protein within the cytoplasm. Required for Yop secretion. The polypeptide is Type 3 secretion system chaperone YscE (Yersinia enterocolitica).